A 333-amino-acid chain; its full sequence is tRNA N6-adenosine threonylcarbamoyltransferase (333 aa).

Fe cation-binding residues include His111 and His115. Residues 134-138 (LVSGG), Asp167, Gly180, and Asn272 each bind substrate. Asp300 provides a ligand contact to Fe cation.

Belongs to the KAE1 / TsaD family. The cofactor is Fe(2+).

The protein resides in the cytoplasm. It catalyses the reaction L-threonylcarbamoyladenylate + adenosine(37) in tRNA = N(6)-L-threonylcarbamoyladenosine(37) in tRNA + AMP + H(+). Required for the formation of a threonylcarbamoyl group on adenosine at position 37 (t(6)A37) in tRNAs that read codons beginning with adenine. Is involved in the transfer of the threonylcarbamoyl moiety of threonylcarbamoyl-AMP (TC-AMP) to the N6 group of A37, together with TsaE and TsaB. TsaD likely plays a direct catalytic role in this reaction. In Legionella pneumophila subsp. pneumophila (strain Philadelphia 1 / ATCC 33152 / DSM 7513), this protein is tRNA N6-adenosine threonylcarbamoyltransferase.